We begin with the raw amino-acid sequence, 25 residues long: Neuromedin-U-25 (25 aa).

Gln18 is subject to Pyrrolidone carboxylic acid. Position 25 is an asparagine amide (Asn25).

This sequence belongs to the NmU family.

It localises to the secreted. In terms of biological role, stimulates uterine smooth muscle contraction and causes selective vasoconstriction. This Canis lupus familiaris (Dog) protein is Neuromedin-U-25 (NMU).